Reading from the N-terminus, the 548-residue chain is Glycosyl hydrolase family 109 protein 3 (548 aa).

The N-terminal stretch at 1–21 is a signal peptide; it reads MKLKKLLLSVLMLLSISGLQA. NAD(+)-binding positions include 71-72, aspartate 93, 141-144, 161-162, and asparagine 190; these read MR, WNHH, and EV. Tyrosine 219 contacts substrate. 240–244 is an NAD(+) binding site; the sequence is DNLHW. Substrate contacts are provided by residues arginine 245, 257–260, and tyrosine 335; that span reads YATH. Tyrosine 257 is a binding site for NAD(+).

It belongs to the Gfo/Idh/MocA family. Glycosyl hydrolase 109 subfamily. NAD(+) is required as a cofactor.

Functionally, glycosidase. In Phocaeicola vulgatus (strain ATCC 8482 / DSM 1447 / JCM 5826 / CCUG 4940 / NBRC 14291 / NCTC 11154) (Bacteroides vulgatus), this protein is Glycosyl hydrolase family 109 protein 3.